The sequence spans 756 residues: Disintegrin and metalloproteinase domain-containing protein 5 (756 aa).

The N-terminal stretch at 1 to 16 is a signal peptide; the sequence is MFLLLVLLTGLGGMHA. Positions 17 to 142 are excised as a propeptide; the sequence is DLNPHKTFLQ…AVSGFIHKIY (126 aa). Residues 17–698 lie on the Extracellular side of the membrane; it reads DLNPHKTFLQ…GRHAPFQKQR (682 aa). A Peptidase M12B domain is found at 183–380; that stretch reads RYIEMHIVVD…NGLTCLQTNP (198 aa). Intrachain disulfides connect Cys-292–Cys-375, Cys-334–Cys-359, Cys-336–Cys-341, and Cys-449–Cys-470. Positions 389–478 constitute a Disintegrin domain; sequence RRICGNGLLE…YCLLDTYVRD (90 aa). N-linked (GlcNAc...) asparagine glycosylation is present at Asn-559. One can recognise an EGF-like domain in the interval 630-664; the sequence is DFETCEASIECSGHGICNNFNHCHCEKGYNPPHCK. Disulfide bonds link Cys-634-Cys-646, Cys-640-Cys-652, and Cys-654-Cys-663. The chain crosses the membrane as a helical span at residues 699–719; that stretch reads FQLIFYISLPVLIITTAILIK. Topologically, residues 720-756 are cytoplasmic; it reads RKKLRELCYRGETESESSVSQESSSNSKSSLSESTSL. The segment at 731-756 is disordered; sequence ETESESSVSQESSSNSKSSLSESTSL. Over residues 735-756 the composition is skewed to low complexity; it reads ESSVSQESSSNSKSSLSESTSL.

In terms of assembly, interacts with TEX101. In terms of processing, subject to proteolytic processing during epididymal transit of spermatozoa. In terms of tissue distribution, detected in testis (at protein level). Detected in adult and prepubertal testis. Detected at very low levels in heart, kidney, brain, muscle ovary and uterus.

The protein resides in the membrane. Functionally, this is a non catalytic metalloprotease-like protein. May play a role in sperm-egg fusion. The polypeptide is Disintegrin and metalloproteinase domain-containing protein 5 (ADAM5) (Macaca fascicularis (Crab-eating macaque)).